The primary structure comprises 605 residues: Threonine--tRNA ligase (605 aa).

The interval 195 to 497 is catalytic; the sequence is DHRKVGKELG…LIEEYAGDFP (303 aa). Zn(2+) contacts are provided by cysteine 294, histidine 345, and histidine 474.

This sequence belongs to the class-II aminoacyl-tRNA synthetase family. Homodimer. Zn(2+) serves as cofactor.

The protein resides in the cytoplasm. It carries out the reaction tRNA(Thr) + L-threonine + ATP = L-threonyl-tRNA(Thr) + AMP + diphosphate + H(+). Functionally, catalyzes the attachment of threonine to tRNA(Thr) in a two-step reaction: L-threonine is first activated by ATP to form Thr-AMP and then transferred to the acceptor end of tRNA(Thr). Also edits incorrectly charged L-seryl-tRNA(Thr). The polypeptide is Threonine--tRNA ligase (Thermosynechococcus vestitus (strain NIES-2133 / IAM M-273 / BP-1)).